Here is a 592-residue protein sequence, read N- to C-terminus: Pectinesterase/pectinesterase inhibitor 3 (592 aa).

A signal peptide spans 1-35 (MAPSMKEIFSKDNFKKNKKLVLLSAAVALLFVAAV). Positions 36–238 (AGISAGASKA…KITSNNRKLK (203 aa)) are cleaved as a propeptide — removed in mature 42 kDa form. Positions 36-273 (AGISAGASKA…WLSAGDRRLL (238 aa)) are cleaved as a propeptide — removed in mature 38 kDa form. The interval 53-212 (PSSHAVLRSS…EHMCSNALAM (160 aa)) is pectinesterase inhibitor 3. N-linked (GlcNAc...) asparagine glycosylation is found at Asn-96 and Asn-215. A pectinesterase 3 region spans residues 281–578 (DATVAADGSG…YTAGQFIGGG (298 aa)). Thr-356 and Gln-386 together coordinate substrate. The active-site Proton donor; for pectinesterase activity is the Asp-409. Cys-423 and Cys-443 are oxidised to a cystine. The active-site Nucleophile; for pectinesterase activity is the Asp-430. Substrate-binding residues include Gln-454, Arg-498, and Trp-500.

In the N-terminal section; belongs to the PMEI family. The protein in the C-terminal section; belongs to the pectinesterase family. As to quaternary structure, interacts with BIIDXI and At5g11420. Binds reversibly to PMEI4, PMEI7 and PMEI8 to be inhibited; the stability of the PME3-PMEIs complexes and the inhibition of the pectin methylesterase (PME) activity is pH-dependent, based on protonation status of amino-acids at the complex interface. As to expression, expressed in roots, cotyledons, hypocotyls, seedlings, leaves, stems, flowers, dry seeds and siliques. Accumulates in etiolated hypocotyls (at protein level).

The protein localises to the secreted. The protein resides in the extracellular space. Its subcellular location is the apoplast. It localises to the cell wall. The catalysed reaction is [(1-&gt;4)-alpha-D-galacturonosyl methyl ester](n) + n H2O = [(1-&gt;4)-alpha-D-galacturonosyl](n) + n methanol + n H(+). It participates in glycan metabolism; pectin degradation; 2-dehydro-3-deoxy-D-gluconate from pectin: step 1/5. Its activity is regulated as follows. Regulated negatively by pectinesterase inhibitors (e.g. PMEI3, PMEI4, PMEI7 and PMEI9) in a pH-dependent manner, mainly in slightly acidic conditions (pH 6.0 and 5.0), especially in dark-grown hypocotyls; this processus relies on changes in the protonation of amino acids involved in intermolecular and intramolecular interactions. Its function is as follows. Acts in the modification of cell walls via demethylesterification of cell wall pectin. Required for zinc Zn(2+) homeostasis and to monitor Zn(2+) influence on cell wall-controlled growth processes such as root cell elongation. Monitors seed germination and favors root hairs production. Prevents cruciferin seed storage proteins activity, but promotes the expression of genes involved in cell wall organization and remodeling as well as genes involved in lipid and protein metabolism, during post-germinative growth of seedlings. Confers sensitivity to Zn(2+) when overexpressed. Acts as a susceptibility factor required for the initial colonization of the host tissue by virulent pathogens including Botrytis cinerea and Pectobacterium carotovorum, probably by facilitating cell wall pectine degradation by pathogen pectic enzymes after its demethylesterification. The polypeptide is Pectinesterase/pectinesterase inhibitor 3 (Arabidopsis thaliana (Mouse-ear cress)).